A 278-amino-acid chain; its full sequence is Splicing factor YJU2 (278 aa).

Zn(2+)-binding residues include C51, C54, C88, and C91. Residues 228 to 278 form a disordered region; it reads HRQRTNKPGNNNDEKRTPLFNPTSTKGKIQKKSSVRTNPLGIVIKRGKSLK. Short sequence motifs (nuclear localization signal) lie at residues 242–258 and 260–278; these read KRTP…KIQK and SSVR…KSLK.

Belongs to the CWC16 family. YJU2 subfamily. As to quaternary structure, component of the spliceosome. Present in the activated B complex, the catalytically activated B* complex which catalyzes the branching, the catalytic step 1 C complex catalyzing the exon ligation, and the postcatalytic P complex containing the ligated exons (mRNA) and the excised lariat intron. Interacts (via C-terminus) with CLF1. Interacts (via N-terminus) with SYF1. Interacts with U2 snRNA; this interaction is direct. Identified in the CWC complex (or CEF1-associated complex), a spliceosome sub-complex reminiscent of a late-stage spliceosome composed of the U2, U5 and U6 snRNAs and at least BUD13, BUD31, BRR2, CDC40, CEF1, CLF1, CUS1, CWC2, CWC15, CWC21, CWC22, CWC23, CWC24, CWC25, CWC27, ECM2, HSH155, IST3, ISY1, LEA1, MSL1, NTC20, PRP8, PRP9, PRP11, PRP19, PRP21, PRP22, PRP45, PRP46, SLU7, SMB1, SMD1, SMD2, SMD3, SMX2, SMX3, SNT309, SNU114, SPP2, SYF1, SYF2, RSE1 and YJU2.

The protein resides in the nucleus. Its function is as follows. Part of the spliceosome which catalyzes two sequential transesterification reactions, first the excision of the non-coding intron from pre-mRNA and then the ligation of the coding exons to form the mature mRNA. Plays a role (via N-terminus) in stabilizing the structure of the spliceosome catalytic core and docking of the branch helix into the active site, producing 5'-exon and lariat intron-3'-intermediates. Further stabilizes spliceosome conformation for 3'-splice site docking (via C-terminus) promoting exon ligation. The protein is Splicing factor YJU2 of Saccharomyces cerevisiae (strain ATCC 204508 / S288c) (Baker's yeast).